Reading from the N-terminus, the 388-residue chain is Succinate--CoA ligase [ADP-forming] subunit beta (388 aa).

The region spanning 9-244 is the ATP-grasp domain; it reads KSLFAEYGLP…PSQDDAREAH (236 aa). ATP is bound by residues lysine 46, 53–55, glutamate 99, threonine 102, and glutamate 107; that span reads GRG. Mg(2+)-binding residues include asparagine 199 and aspartate 213. Substrate is bound by residues asparagine 264 and 321–323; that span reads GIV.

This sequence belongs to the succinate/malate CoA ligase beta subunit family. Heterotetramer of two alpha and two beta subunits. Requires Mg(2+) as cofactor.

The catalysed reaction is succinate + ATP + CoA = succinyl-CoA + ADP + phosphate. The enzyme catalyses GTP + succinate + CoA = succinyl-CoA + GDP + phosphate. The protein operates within carbohydrate metabolism; tricarboxylic acid cycle; succinate from succinyl-CoA (ligase route): step 1/1. In terms of biological role, succinyl-CoA synthetase functions in the citric acid cycle (TCA), coupling the hydrolysis of succinyl-CoA to the synthesis of either ATP or GTP and thus represents the only step of substrate-level phosphorylation in the TCA. The beta subunit provides nucleotide specificity of the enzyme and binds the substrate succinate, while the binding sites for coenzyme A and phosphate are found in the alpha subunit. The chain is Succinate--CoA ligase [ADP-forming] subunit beta from Shewanella oneidensis (strain ATCC 700550 / JCM 31522 / CIP 106686 / LMG 19005 / NCIMB 14063 / MR-1).